Consider the following 663-residue polypeptide: Transketolase 1 (663 aa).

Substrate is bound at residue His-26. Lys-46 carries the post-translational modification N6-acetyllysine. Residues His-66 and 114–116 contribute to the thiamine diphosphate site; that span reads GPL. Residue Asp-155 coordinates Mg(2+). Thiamine diphosphate contacts are provided by Gly-156 and Asn-185. The Mg(2+) site is built by Asn-185 and Ile-187. Substrate-binding residues include His-261, Arg-358, and Ser-385. Position 261 (His-261) interacts with thiamine diphosphate. Catalysis depends on Glu-411, which acts as the Proton donor. Residue Phe-437 coordinates thiamine diphosphate. Positions 461, 469, 473, and 520 each coordinate substrate.

Belongs to the transketolase family. As to quaternary structure, homodimer. It depends on Mg(2+) as a cofactor. Requires Ca(2+) as cofactor. The cofactor is Mn(2+). Co(2+) is required as a cofactor. Thiamine diphosphate serves as cofactor.

The enzyme catalyses D-sedoheptulose 7-phosphate + D-glyceraldehyde 3-phosphate = aldehydo-D-ribose 5-phosphate + D-xylulose 5-phosphate. In terms of biological role, catalyzes the transfer of a two-carbon ketol group from a ketose donor to an aldose acceptor, via a covalent intermediate with the cofactor thiamine pyrophosphate. Thus, catalyzes the reversible transfer of a two-carbon ketol group from sedoheptulose-7-phosphate to glyceraldehyde-3-phosphate, producing xylulose-5-phosphate and ribose-5-phosphate. In Escherichia coli (strain K12), this protein is Transketolase 1 (tktA).